A 180-amino-acid polypeptide reads, in one-letter code: uncharacterized protein (180 aa).

Residues 1–31 (MSTYEEEHGIQQNSRDYQEVGGTSQEEQRRQ) form a disordered region. An N-acetylserine modification is found at serine 2. An RING-type zinc finger spans residues 109–153 (CSICYTNYLEDEYPLVVELPHCHHKFDLECLSVWLSRSTTCPLCR).

This is an uncharacterized protein from Saccharomyces cerevisiae (strain ATCC 204508 / S288c) (Baker's yeast).